The primary structure comprises 412 residues: 2-methylacyl-CoA dehydrogenase, mitochondrial (412 aa).

The transit peptide at 1–25 (MHKLFAVRSLSSAIVKSFKSLQNQQ) directs the protein to the mitochondrion. FAD-binding positions include 154–163 (LAMSEPNAGS) and 187–189 (WCT). Position 163 (serine 163) interacts with substrate. Residues 209-210 (SK), tyrosine 264, and 271-274 (DLER) each bind substrate. The Proton acceptor role is filled by glutamate 273. Residues arginine 299, glutamine 310, and 367–371 (QCLGG) contribute to the FAD site. 394–395 (AG) serves as a coordination point for substrate. Position 396–398 (396–398 (TSE)) interacts with FAD.

This sequence belongs to the acyl-CoA dehydrogenase family. As to quaternary structure, homotetramer. FAD serves as cofactor. Expressed in flowers.

It localises to the mitochondrion. The catalysed reaction is 2-methylbutanoyl-CoA + oxidized [electron-transfer flavoprotein] + H(+) = (2E)-2-methylbut-2-enoyl-CoA + reduced [electron-transfer flavoprotein]. Functionally, short/branched-chain acyl-CoA dehydrogenase (SBCAD). Uses 2-methylbutanoyl-CoA as substrate. Minor activity with the straight-chain substrates, butanoyl-CoA, valeryl-CoA, hexanoyl-CoA, and octanoyl-CoA but no activity with isovaleryl-CoA. This chain is 2-methylacyl-CoA dehydrogenase, mitochondrial (2MBCD), found in Solanum tuberosum (Potato).